A 134-amino-acid polypeptide reads, in one-letter code: Phosphoribosyl-AMP cyclohydrolase (134 aa).

Asp-80 is a Mg(2+) binding site. A Zn(2+)-binding site is contributed by Cys-81. Asp-82 and Asp-84 together coordinate Mg(2+). Zn(2+)-binding residues include Cys-98 and Cys-105.

Belongs to the PRA-CH family. Homodimer. Mg(2+) is required as a cofactor. The cofactor is Zn(2+).

The protein localises to the cytoplasm. It carries out the reaction 1-(5-phospho-beta-D-ribosyl)-5'-AMP + H2O = 1-(5-phospho-beta-D-ribosyl)-5-[(5-phospho-beta-D-ribosylamino)methylideneamino]imidazole-4-carboxamide. It participates in amino-acid biosynthesis; L-histidine biosynthesis; L-histidine from 5-phospho-alpha-D-ribose 1-diphosphate: step 3/9. Functionally, catalyzes the hydrolysis of the adenine ring of phosphoribosyl-AMP. The sequence is that of Phosphoribosyl-AMP cyclohydrolase from Bordetella bronchiseptica (strain ATCC BAA-588 / NCTC 13252 / RB50) (Alcaligenes bronchisepticus).